Here is a 1660-residue protein sequence, read N- to C-terminus: MATDGASCEPDLSRAPEDAAGATAEAAKKEFDVDTLSKSELRMLLSVMEGELEARDLVIEALRARRKEVFIQERYGRFNLNDPFLALQRDYEAGAGDKEKKPVCTNPLSILEAVMAHCRKMQERMSAQLAAAESRQKKLEMEKLQLQALEQEHKKLAARLEEERGKNKQVVLMLVKECKQLSGKVIEEAQKLEDVMAKLEEEKKKTNELEEELSAEKRRSTEMEAQMEKQLSEFDTEREQLRAKLNREEAHTTDLKEEIDKMKKMIEQLKRGSDSKPSLSLPRKTKDRRLVSISVGTEGTVTRSVACQTDLVTESADHVKKLPLTTPVKPSTGSPLASANAKGSVCTSAAMARPGIDRQASHGDLIGVSVPAFPPSSANRIEENGPSTGSTPDPTSSTPPLPSNAAPPTAQTPGITPQNSQAPPMHSLHSPCANASLHPGLNPRIQAARFRFQGNANDPDQNGNTTQSPPSRDVSPTSRDNLVAKQLARNTVTQALSRFTGPQAGAPPRPGAPPTADVGTHPSVGRTSVKTHGVARVDRGNPPPIPPKKPGLSQTPSPPHPQLKVLIDSSRASNTGAKGDNKTVASPPSSLPQGNRVINEENLSKSSSPQLPPKPSIDLTVAPAGCAVSALATSQVGAWPAATPGLNQPACSDSSLVIPTTIAFCSSINPVSASSCRPGASDSLLVTASGWSPSLTPLLMSGGPAPLAGRPTLLQQAAAQGNVTLLSMLLNEEGLDINYSCEDGHSALYSAAKNGHTDCVRLLLSAEAQVNAADKNGFTPLCAAAAQGHFECVELLVAYDAHINHAADGGQTPLYLACKNGNKECIKLLLEAGADRSVKTTDGWTSVHAAVDTGNVDSLKLLMYHRVPAHGNSFSEEESESGVFDLDGEEESPEGKSKPVVTADLINHANREGWTAAHIAASKGFKNCLEILCRHGGLETERRDKCNRTAHDVATDDCKHLLENLNALKIPLRILVDEVEPSNYGSDDFECENTICALNIRKQTSWDDFSKAVSQALTNHFQAISSDGWWSLEDVTCNNTTDSNIGLSARSIRSITLGNVPWSVGQSFAQSPWDFMMKNKAEHITVLLSGPQEGCLSSVTYASMIPLQMMQNYLRLVEQYHNVIFHGPEGSLQDYIVHQLALCLKHRQMAAGFSCEIVRAEVDASFSKKQLLDLFISSACLIPVKQSPVKKKIIIILENLEKSSLSELLRDFLAPLENRSTESPCTFQKGNGMSECYYFHENCFLMGTIAKACLQGSDLLVQQHFRWVQLRWDGEPMQGLLQRFLRRKVVNKFRGQVPPPCDPVCKIVDWALSVWRQLNSCLARLGTPEALLGPKYFLSCPVVPGHAQVTVKWMSKLWNGVITPRVQEAILSRASVKRQPGFGQTTAKRHPSQGQQAVVKAALSILLNKAVLHGCPLPRAELAQHTADFKGGSFPLSIVSSYNSCSKKKGESGSWRKVNTSPRRKSGRFSLPTWNKPDLSTEGIKNKTLSQLNCNRNASLSKQKSLENDVSLTLNLDQSLFLGSDDEADLVKELQSMCSSKSESDISKIADSRDDLRTFDSSGNNPVFLATINNLRMPVSQKEVCPLSSHQTTECSNSKSKTELDVSRVKSFLPVPRSKVTQCSQNTKSSSSNTRQIEINNSKEENWNFHKNEHLEKPNK.

Disordered regions lie at residues 1–26 (MATD…TAEA), 203–222 (KKKT…RSTE), 366–440 (IGVS…LHPG), and 454–478 (GNAN…SPTS). A coiled-coil region spans residues 119 to 276 (RKMQERMSAQ…EQLKRGSDSK (158 aa)). Over residues 386 to 396 (PSTGSTPDPTS) the composition is skewed to low complexity. Residues 411-422 (QTPGITPQNSQA) are compositionally biased toward polar residues. An Asymmetric dimethylarginine modification is found at Arg-498. Residues 499 to 596 (FTGPQAGAPP…PPSSLPQGNR (98 aa)) are disordered. Residues 583 to 593 (TVASPPSSLPQ) show a composition bias toward polar residues. 5 ANK repeats span residues 709 to 739 (GRPT…DINY), 743 to 772 (DGHS…QVNA), 776 to 805 (NGFT…HINH), 809 to 838 (GGQT…DRSV), and 842 to 871 (DGWT…PAHG). The segment at 872-897 (NSFSEEESESGVFDLDGEEESPEGKS) is disordered. Residues 875–892 (SEEESESGVFDLDGEEES) are compositionally biased toward acidic residues. The ANK 6 repeat unit spans residues 912–942 (EGWTAAHIAASKGFKNCLEILCRHGGLETER). Positions 1445-1477 (CSKKKGESGSWRKVNTSPRRKSGRFSLPTWNKP) are disordered. The residue at position 1524 (Ser-1524) is a Phosphoserine. The segment at 1617-1660 (RSKVTQCSQNTKSSSSNTRQIEINNSKEENWNFHKNEHLEKPNK) is disordered. Residues 1619–1640 (KVTQCSQNTKSSSSNTRQIEIN) are compositionally biased toward polar residues. A compositionally biased stretch (basic and acidic residues) spans 1641–1660 (NSKEENWNFHKNEHLEKPNK).

In terms of assembly, interacts with CTTN/cortactin SH3 domain. Interacts with STRN, STRN4/zinedin and MOB4/phocein; this interactions mediate the association with the STRIPAK core complex and may regulate dendritic spine distribution of the STRIPAK complex in hippocampal neurons. Activation of glutamate receptors weakens the interaction with STRN and STRN4.

The protein resides in the cytoplasm. It localises to the cell cortex. The protein localises to the cell projection. It is found in the dendritic spine. Functionally, regulates the dendritic spine distribution of CTTN/cortactin in hippocampal neurons, and thus controls dendritic spinogenesis and dendritic spine maintenance. Associates with the striatin-interacting phosphatase and kinase (STRIPAK) core complex to regulate dendritic spine distribution of the STRIPAK complex in hippocampal neurons. This chain is Cortactin-binding protein 2 (CTTNBP2), found in Ateles geoffroyi (Black-handed spider monkey).